The sequence spans 144 residues: L-fucose mutarotase (144 aa).

The active-site Proton donor is histidine 22. Substrate is bound by residues aspartate 30, arginine 109, and 131–133 (YGN).

This sequence belongs to the RbsD / FucU family. FucU mutarotase subfamily. Homodecamer.

The protein localises to the cytoplasm. It carries out the reaction alpha-L-fucose = beta-L-fucose. It functions in the pathway carbohydrate metabolism; L-fucose metabolism. Its function is as follows. Involved in the anomeric conversion of L-fucose. The chain is L-fucose mutarotase from Actinobacillus pleuropneumoniae serotype 5b (strain L20).